Reading from the N-terminus, the 355-residue chain is Phospho-N-acetylmuramoyl-pentapeptide-transferase (355 aa).

Helical transmembrane passes span 14–34 (PTGT…VVFF), 40–60 (LLIP…QVVP), 84–104 (GTPT…ALIW), 107–127 (FTPN…IGWL), 147–167 (LILQ…NQVS), 176–196 (LVIP…VAES), 205–225 (VDGL…IIIA), 227–247 (SHPD…GFIF), 268–290 (ALAA…GLFF), and 334–354 (TKIV…AIWS).

It belongs to the glycosyltransferase 4 family. MraY subfamily. Requires Mg(2+) as cofactor.

Its subcellular location is the cell inner membrane. It catalyses the reaction UDP-N-acetyl-alpha-D-muramoyl-L-alanyl-gamma-D-glutamyl-meso-2,6-diaminopimeloyl-D-alanyl-D-alanine + di-trans,octa-cis-undecaprenyl phosphate = di-trans,octa-cis-undecaprenyl diphospho-N-acetyl-alpha-D-muramoyl-L-alanyl-D-glutamyl-meso-2,6-diaminopimeloyl-D-alanyl-D-alanine + UMP. It functions in the pathway cell wall biogenesis; peptidoglycan biosynthesis. Functionally, catalyzes the initial step of the lipid cycle reactions in the biosynthesis of the cell wall peptidoglycan: transfers peptidoglycan precursor phospho-MurNAc-pentapeptide from UDP-MurNAc-pentapeptide onto the lipid carrier undecaprenyl phosphate, yielding undecaprenyl-pyrophosphoryl-MurNAc-pentapeptide, known as lipid I. This Microcystis aeruginosa (strain NIES-843 / IAM M-2473) protein is Phospho-N-acetylmuramoyl-pentapeptide-transferase.